The primary structure comprises 132 residues: MDSRTGEFITVHQAENGVYIWEIANPLYFRIYKVEDPLYTRTRIYHVQIRFNHNLRRALHLHKAYLNFQVWTTSMTASGSIYLNRFRRLVNMYLDQLGVISINNVIRAVQFATNRTYVNYVLENHSIKFKFY.

It belongs to the geminiviridae replication enhancer protein family. As to quaternary structure, homooligomer. Interacts with the replication-associated protein (REP). Interacts with host proliferating cell nuclear antigen (PCNA). Interacts with host retinoblastoma-related protein 1 (RBR1), and may thereby deregulate the host cell cycle. Oligomerization and interaction with PCNA are necessary for optimal replication enhancement.

Functionally, increases viral DNA accumulation. Enhances infectivity and symptom expression. This is Replication enhancer protein from Abutilon (Upland cotton).